A 202-amino-acid polypeptide reads, in one-letter code: LexA repressor (202 aa).

A DNA-binding region (H-T-H motif) is located at residues 28–47; it reads IREIGDQFGITAKGAYDHLK. Active-site for autocatalytic cleavage activity residues include Ser-126 and Lys-163.

The protein belongs to the peptidase S24 family. Homodimer.

It carries out the reaction Hydrolysis of Ala-|-Gly bond in repressor LexA.. Its function is as follows. Represses a number of genes involved in the response to DNA damage (SOS response), including recA and lexA. In the presence of single-stranded DNA, RecA interacts with LexA causing an autocatalytic cleavage which disrupts the DNA-binding part of LexA, leading to derepression of the SOS regulon and eventually DNA repair. The polypeptide is LexA repressor (Leptospira biflexa serovar Patoc (strain Patoc 1 / Ames)).